The chain runs to 248 residues: Phosphatidylserine decarboxylase proenzyme (248 aa).

Ser-206 acts as the Schiff-base intermediate with substrate; via pyruvic acid in catalysis. Ser-206 is subject to Pyruvic acid (Ser); by autocatalysis.

It belongs to the phosphatidylserine decarboxylase family. PSD-A subfamily. In terms of assembly, heterodimer of a large membrane-associated beta subunit and a small pyruvoyl-containing alpha subunit. It depends on pyruvate as a cofactor. Is synthesized initially as an inactive proenzyme. Formation of the active enzyme involves a self-maturation process in which the active site pyruvoyl group is generated from an internal serine residue via an autocatalytic post-translational modification. Two non-identical subunits are generated from the proenzyme in this reaction, and the pyruvate is formed at the N-terminus of the alpha chain, which is derived from the carboxyl end of the proenzyme. The post-translation cleavage follows an unusual pathway, termed non-hydrolytic serinolysis, in which the side chain hydroxyl group of the serine supplies its oxygen atom to form the C-terminus of the beta chain, while the remainder of the serine residue undergoes an oxidative deamination to produce ammonia and the pyruvoyl prosthetic group on the alpha chain.

It localises to the cell membrane. The enzyme catalyses a 1,2-diacyl-sn-glycero-3-phospho-L-serine + H(+) = a 1,2-diacyl-sn-glycero-3-phosphoethanolamine + CO2. It functions in the pathway phospholipid metabolism; phosphatidylethanolamine biosynthesis; phosphatidylethanolamine from CDP-diacylglycerol: step 2/2. In terms of biological role, catalyzes the formation of phosphatidylethanolamine (PtdEtn) from phosphatidylserine (PtdSer). This chain is Phosphatidylserine decarboxylase proenzyme, found in Nitrobacter hamburgensis (strain DSM 10229 / NCIMB 13809 / X14).